The following is a 108-amino-acid chain: MMKGQLAGLMKQAQQMQENMKKMQEQLALIEVEGQSGAGLVKVTMTCRNEVRRVSIDPSLLADDKDMLEDLVAAAFNDAVRKAEVTSQEKMSGMTAGLPLPPGFKLPF.

The protein belongs to the YbaB/EbfC family. Homodimer.

It is found in the cytoplasm. Its subcellular location is the nucleoid. Its function is as follows. Binds to DNA and alters its conformation. May be involved in regulation of gene expression, nucleoid organization and DNA protection. In Burkholderia thailandensis (strain ATCC 700388 / DSM 13276 / CCUG 48851 / CIP 106301 / E264), this protein is Nucleoid-associated protein BTH_I2220.